We begin with the raw amino-acid sequence, 88 residues long: ATP synthase F(0) complex subunit f, mitochondrial (88 aa).

Ala-2 is modified (N-acetylalanine). Residue Ser-3 is modified to Phosphoserine. Lys-16 is subject to N6-acetyllysine. The chain crosses the membrane as a helical span at residues 62–79 (MVLAAYVFLNYCRSYKEL).

As to quaternary structure, component of the ATP synthase complex composed at least of ATP5F1A/subunit alpha, ATP5F1B/subunit beta, ATP5MC1/subunit c (homooctomer), MT-ATP6/subunit a, MT-ATP8/subunit 8, ATP5ME/subunit e, ATP5MF/subunit f, ATP5MG/subunit g, ATP5MK/subunit k, ATP5MJ/subunit j, ATP5F1C/subunit gamma, ATP5F1D/subunit delta, ATP5F1E/subunit epsilon, ATP5PF/subunit F6, ATP5PB/subunit b, ATP5PD/subunit d, ATP5PO/subunit OSCP. ATP synthase complex consists of a soluble F(1) head domain (subunits alpha(3) and beta(3)) - the catalytic core - and a membrane F(0) domain - the membrane proton channel (subunits c, a, 8, e, f, g, k and j). These two domains are linked by a central stalk (subunits gamma, delta, and epsilon) rotating inside the F1 region and a stationary peripheral stalk (subunits F6, b, d, and OSCP).

The protein resides in the mitochondrion. The protein localises to the mitochondrion inner membrane. Its function is as follows. Subunit f, of the mitochondrial membrane ATP synthase complex (F(1)F(0) ATP synthase or Complex V) that produces ATP from ADP in the presence of a proton gradient across the membrane which is generated by electron transport complexes of the respiratory chain. ATP synthase complex consist of a soluble F(1) head domain - the catalytic core - and a membrane F(1) domain - the membrane proton channel. These two domains are linked by a central stalk rotating inside the F(1) region and a stationary peripheral stalk. During catalysis, ATP synthesis in the catalytic domain of F(1) is coupled via a rotary mechanism of the central stalk subunits to proton translocation. In vivo, can only synthesize ATP although its ATP hydrolase activity can be activated artificially in vitro. Part of the complex F(0) domain. The chain is ATP synthase F(0) complex subunit f, mitochondrial from Bos taurus (Bovine).